A 201-amino-acid chain; its full sequence is Coiled-coil domain-containing protein 195 (201 aa).

Residues 4–38 (DIQLMRLIQEMRAEIHKLEKENQALRMKLTASSQR) are a coiled coil. Disordered regions lie at residues 28–72 (LRMK…DAAP) and 179–201 (SKNS…IIAE). Over residues 179 to 188 (SKNSSSLKHS) the composition is skewed to low complexity. The span at 189–201 (PNQATNQLSIIAE) shows a compositional bias: polar residues.

This chain is Coiled-coil domain-containing protein 195, found in Homo sapiens (Human).